An 83-amino-acid polypeptide reads, in one-letter code: Large ribosomal subunit protein eL43 (83 aa).

Zn(2+) contacts are provided by Cys-38, Cys-41, Cys-56, and Cys-59. Residues 38-59 (CPVCGRKAVKRISTGIWQCQKC) form a C4-type zinc finger.

It belongs to the eukaryotic ribosomal protein eL43 family. Putative zinc-binding subfamily. Part of the 50S ribosomal subunit. The cofactor is Zn(2+).

In terms of biological role, binds to the 23S rRNA. This chain is Large ribosomal subunit protein eL43, found in Pyrococcus furiosus (strain ATCC 43587 / DSM 3638 / JCM 8422 / Vc1).